The sequence spans 265 residues: 4-hydroxy-tetrahydrodipicolinate reductase (265 aa).

NAD(+)-binding positions include 7–12 (GASGRM) and Asp33. Position 34 (Arg34) interacts with NADP(+). NAD(+)-binding positions include 96 to 98 (GTT) and 120 to 123 (SANM). His153 functions as the Proton donor/acceptor in the catalytic mechanism. His154 contacts (S)-2,3,4,5-tetrahydrodipicolinate. Lys157 serves as the catalytic Proton donor. Position 163 to 164 (163 to 164 (GT)) interacts with (S)-2,3,4,5-tetrahydrodipicolinate.

Belongs to the DapB family.

It localises to the cytoplasm. It catalyses the reaction (S)-2,3,4,5-tetrahydrodipicolinate + NAD(+) + H2O = (2S,4S)-4-hydroxy-2,3,4,5-tetrahydrodipicolinate + NADH + H(+). It carries out the reaction (S)-2,3,4,5-tetrahydrodipicolinate + NADP(+) + H2O = (2S,4S)-4-hydroxy-2,3,4,5-tetrahydrodipicolinate + NADPH + H(+). It functions in the pathway amino-acid biosynthesis; L-lysine biosynthesis via DAP pathway; (S)-tetrahydrodipicolinate from L-aspartate: step 4/4. Functionally, catalyzes the conversion of 4-hydroxy-tetrahydrodipicolinate (HTPA) to tetrahydrodipicolinate. In Burkholderia pseudomallei (strain 1106a), this protein is 4-hydroxy-tetrahydrodipicolinate reductase.